The primary structure comprises 532 residues: Light-independent protochlorophyllide reductase subunit B (532 aa).

Residue Asp-36 participates in [4Fe-4S] cluster binding. Asp-292 (proton donor) is an active-site residue. 428-429 provides a ligand contact to substrate; that stretch reads GL. The tract at residues 445–486 is disordered; sequence EEEEPESISNGHAAAAGSEGGVPDSGEAGDAGDTDGMPWSPD.

The protein belongs to the ChlB/BchB/BchZ family. In terms of assembly, protochlorophyllide reductase is composed of three subunits; BchL, BchN and BchB. Forms a heterotetramer of two BchB and two BchN subunits. [4Fe-4S] cluster is required as a cofactor.

It catalyses the reaction chlorophyllide a + oxidized 2[4Fe-4S]-[ferredoxin] + 2 ADP + 2 phosphate = protochlorophyllide a + reduced 2[4Fe-4S]-[ferredoxin] + 2 ATP + 2 H2O. The protein operates within porphyrin-containing compound metabolism; bacteriochlorophyll biosynthesis (light-independent). Functionally, component of the dark-operative protochlorophyllide reductase (DPOR) that uses Mg-ATP and reduced ferredoxin to reduce ring D of protochlorophyllide (Pchlide) to form chlorophyllide a (Chlide). This reaction is light-independent. The NB-protein (BchN-BchB) is the catalytic component of the complex. This is Light-independent protochlorophyllide reductase subunit B from Chlorobium phaeobacteroides (strain BS1).